The chain runs to 210 residues: Orotate phosphoribosyltransferase (210 aa).

Residues arginine 96, lysine 100, histidine 102, and 122–130 (EDLISTGGS) contribute to the 5-phospho-alpha-D-ribose 1-diphosphate site. Serine 126 is an orotate binding site.

Belongs to the purine/pyrimidine phosphoribosyltransferase family. PyrE subfamily. Homodimer. Requires Mg(2+) as cofactor.

The catalysed reaction is orotidine 5'-phosphate + diphosphate = orotate + 5-phospho-alpha-D-ribose 1-diphosphate. The protein operates within pyrimidine metabolism; UMP biosynthesis via de novo pathway; UMP from orotate: step 1/2. Functionally, catalyzes the transfer of a ribosyl phosphate group from 5-phosphoribose 1-diphosphate to orotate, leading to the formation of orotidine monophosphate (OMP). This chain is Orotate phosphoribosyltransferase (pyrE), found in Streptococcus pneumoniae serotype 19F (strain G54).